The sequence spans 303 residues: N-acetyl-D-glucosamine kinase (303 aa).

Residues 4 to 11 (GFDIGGTK) and 133 to 140 (GVGGGLIF) contribute to the ATP site. Histidine 157, cysteine 177, cysteine 179, and cysteine 184 together coordinate Zn(2+).

Belongs to the ROK (NagC/XylR) family. NagK subfamily.

It carries out the reaction N-acetyl-D-glucosamine + ATP = N-acetyl-D-glucosamine 6-phosphate + ADP + H(+). Its pathway is cell wall biogenesis; peptidoglycan recycling. Catalyzes the phosphorylation of N-acetyl-D-glucosamine (GlcNAc) derived from cell-wall degradation, yielding GlcNAc-6-P. In Shigella boydii serotype 4 (strain Sb227), this protein is N-acetyl-D-glucosamine kinase.